Consider the following 132-residue polypeptide: Small ribosomal subunit protein uS8 (132 aa).

Belongs to the universal ribosomal protein uS8 family. In terms of assembly, part of the 30S ribosomal subunit. Contacts proteins S5 and S12.

In terms of biological role, one of the primary rRNA binding proteins, it binds directly to 16S rRNA central domain where it helps coordinate assembly of the platform of the 30S subunit. This is Small ribosomal subunit protein uS8 from Beijerinckia indica subsp. indica (strain ATCC 9039 / DSM 1715 / NCIMB 8712).